Reading from the N-terminus, the 211-residue chain is ATP phosphoribosyltransferase (211 aa).

It belongs to the ATP phosphoribosyltransferase family. Short subfamily. As to quaternary structure, heteromultimer composed of HisG and HisZ subunits.

Its subcellular location is the cytoplasm. It catalyses the reaction 1-(5-phospho-beta-D-ribosyl)-ATP + diphosphate = 5-phospho-alpha-D-ribose 1-diphosphate + ATP. The protein operates within amino-acid biosynthesis; L-histidine biosynthesis; L-histidine from 5-phospho-alpha-D-ribose 1-diphosphate: step 1/9. In terms of biological role, catalyzes the condensation of ATP and 5-phosphoribose 1-diphosphate to form N'-(5'-phosphoribosyl)-ATP (PR-ATP). Has a crucial role in the pathway because the rate of histidine biosynthesis seems to be controlled primarily by regulation of HisG enzymatic activity. The polypeptide is ATP phosphoribosyltransferase (Thermosynechococcus vestitus (strain NIES-2133 / IAM M-273 / BP-1)).